Reading from the N-terminus, the 98-residue chain is Large ribosomal subunit protein uL23 (98 aa).

Belongs to the universal ribosomal protein uL23 family. In terms of assembly, part of the 50S ribosomal subunit. Contacts protein L29, and trigger factor when it is bound to the ribosome.

One of the early assembly proteins it binds 23S rRNA. One of the proteins that surrounds the polypeptide exit tunnel on the outside of the ribosome. Forms the main docking site for trigger factor binding to the ribosome. The sequence is that of Large ribosomal subunit protein uL23 from Parafrankia sp. (strain EAN1pec).